Reading from the N-terminus, the 225-residue chain is Large ribosomal subunit protein bL25 (225 aa).

A disordered region spans residues 188-225 (EEIEEAEAEAQATDADTATDDSEQTSEEQAEENKEDKE). Positions 204-217 (TATDDSEQTSEEQA) are enriched in acidic residues.

This sequence belongs to the bacterial ribosomal protein bL25 family. CTC subfamily. In terms of assembly, part of the 50S ribosomal subunit; part of the 5S rRNA/L5/L18/L25 subcomplex. Contacts the 5S rRNA. Binds to the 5S rRNA independently of L5 and L18.

In terms of biological role, this is one of the proteins that binds to the 5S RNA in the ribosome where it forms part of the central protuberance. The sequence is that of Large ribosomal subunit protein bL25 from Exiguobacterium sibiricum (strain DSM 17290 / CCUG 55495 / CIP 109462 / JCM 13490 / 255-15).